We begin with the raw amino-acid sequence, 508 residues long: MSRFVQDLSKAMSQDGASQFQEVILQELELSVKKELEKILTTAASHEFEHTKKDLDGFRKLFHRFLQEKGPSVDWGKIQRPPEDSIQPYEKIKARGLPDNISSVLNKLVVVKLNGGLGTSMGCKGPKSLIGVRNENTFLDLTVQQIEHLNKTYNTDVPLVLMNSFNTDEDTKKILQKYNHCRVKIYTFNQSRYPRINKESLLPIAKDVSYSGENTEAWYPPGHGDIYASFYNSGLLDTFIEEGKEYIFVSNIDNLGATVDLYILNHLMNPPNGKRCEFVMEVTNKTRADVKGGTLTQYEGKLRLVEIAQVPKAHVDEFKSVSKFKIFNTNNLWISLGAVKRLQEQNAIDMEIIVNPKTLDGGLNVIQLETAVGAAIKSFENSLGINVPRSRFLPVKTTSDLLLVMSNLYSLNAGSLTMSEKREFPTVPLVKLGSSFTKVQDYLRRFESIPDMLELDHLTVSGDVTFGKNVSLKGTVIIIANHGDRIDIPPGAVLENKIVSGNLRILDH.

Ser-13 carries the post-translational modification Phosphoserine. Residues 113 to 116 (LNGG), Lys-127, Gln-190, and Gly-222 each bind UTP. 115–116 (GG) provides a ligand contact to substrate. Mg(2+) is bound at residue Lys-127. Residues His-223 and 251-253 (NID) contribute to the substrate site. Positions 253 and 396 each coordinate UTP. Asp-253 is a binding site for Mg(2+). Residue Lys-396 is part of the active site. Position 426 is a phosphothreonine (Thr-426). Ser-434 bears the Phosphoserine mark. An N6-acetyllysine modification is found at Lys-438. A phosphoserine mark is found at Ser-448 and Ser-461. Residues 457–508 (HLTVSGDVTFGKNVSLKGTVIIIANHGDRIDIPPGAVLENKIVSGNLRILDH) form an oligomerization region. Residues 502–503 (NL) form a critical for end-to-end subunit interaction region.

This sequence belongs to the UDPGP type 1 family. As to quaternary structure, homooctamer.

It localises to the cytoplasm. It catalyses the reaction alpha-D-glucose 1-phosphate + UTP + H(+) = UDP-alpha-D-glucose + diphosphate. It functions in the pathway glycan biosynthesis; glycogen biosynthesis. UTP--glucose-1-phosphate uridylyltransferase catalyzing the conversion of glucose-1-phosphate into UDP-glucose, a crucial precursor for the production of glycogen. This Mus musculus (Mouse) protein is UTP--glucose-1-phosphate uridylyltransferase (Ugp2).